The primary structure comprises 401 residues: Dynactin subunit 2 (401 aa).

The interval 1–25 is disordered; it reads MADPKYADLPGIARNEPDVYETSDL. Alanine 2 carries the N-acetylalanine modification. Phosphotyrosine is present on tyrosine 6. Serine 83 carries the post-translational modification Phosphoserine. Tyrosine 86 is subject to Phosphotyrosine. The stretch at 99 to 132 forms a coiled coil; sequence PQQKYQRLLHEVQELTTEVEKIKTTVKESATEEK. Phosphothreonine occurs at positions 134 and 198. Positions 214–244 form a coiled coil; that stretch reads EQDKFSQAAKVAELEKRLTELETAVRCDQDA. Phosphoserine is present on serine 320. A coiled-coil region spans residues 379–399; the sequence is RENLATVEGNFASIDERMKKL.

Belongs to the dynactin subunit 2 family. In terms of assembly, subunit of dynactin, a multiprotein complex part of a tripartite complex with dynein and a adapter, such as BICDL1, BICD2 or HOOK3. The dynactin complex is built around ACTR1A/ACTB filament and consists of an actin-related filament composed of a shoulder domain, a pointed end and a barbed end. Its length is defined by its flexible shoulder domain. The soulder is composed of 2 DCTN1 subunits, 4 DCTN2 and 2 DCTN3. The 4 DCNT2 (via N-terminus) bind the ACTR1A filament and act as molecular rulers to determine the length. The pointed end is important for binding dynein-dynactin cargo adapters and consists of 4 subunits: ACTR10, DCNT4, DCTN5 and DCTN6. The barbed end is composed of a CAPZA1:CAPZB heterodimers, which binds ACTR1A/ACTB filament and dynactin and stabilizes dynactin. Interacts with BICD2 and CEP135. Interacts with DYNAP. Interacts with ECPAS. Interacts with MAPRE1.

The protein resides in the cytoplasm. Its subcellular location is the cytoskeleton. It localises to the microtubule organizing center. The protein localises to the centrosome. It is found in the membrane. Its function is as follows. Part of the dynactin complex that activates the molecular motor dynein for ultra-processive transport along microtubules. In the dynactin soulder domain, binds the ACTR1A filament and acts as a molecular ruler to determine the length. Modulates cytoplasmic dynein binding to an organelle, and plays a role in prometaphase chromosome alignment and spindle organization during mitosis. Involved in anchoring microtubules to centrosomes. May play a role in synapse formation during brain development. This is Dynactin subunit 2 from Homo sapiens (Human).